We begin with the raw amino-acid sequence, 264 residues long: Thymidylate synthase (264 aa).

A dUMP-binding site is contributed by Arg-21. His-51 serves as a coordination point for (6R)-5,10-methylene-5,6,7,8-tetrahydrofolate. 126-127 is a binding site for dUMP; it reads RR. The active-site Nucleophile is Cys-146. DUMP is bound by residues 166–169, Asn-177, and 207–209; these read RSAD and HLY. Asp-169 contributes to the (6R)-5,10-methylene-5,6,7,8-tetrahydrofolate binding site. Ser-263 is a binding site for (6R)-5,10-methylene-5,6,7,8-tetrahydrofolate.

The protein belongs to the thymidylate synthase family. Bacterial-type ThyA subfamily. In terms of assembly, homodimer.

Its subcellular location is the cytoplasm. It catalyses the reaction dUMP + (6R)-5,10-methylene-5,6,7,8-tetrahydrofolate = 7,8-dihydrofolate + dTMP. Its pathway is pyrimidine metabolism; dTTP biosynthesis. Catalyzes the reductive methylation of 2'-deoxyuridine-5'-monophosphate (dUMP) to 2'-deoxythymidine-5'-monophosphate (dTMP) while utilizing 5,10-methylenetetrahydrofolate (mTHF) as the methyl donor and reductant in the reaction, yielding dihydrofolate (DHF) as a by-product. This enzymatic reaction provides an intracellular de novo source of dTMP, an essential precursor for DNA biosynthesis. This is Thymidylate synthase from Nitrosococcus oceani (strain ATCC 19707 / BCRC 17464 / JCM 30415 / NCIMB 11848 / C-107).